Here is a 416-residue protein sequence, read N- to C-terminus: Multifunctional CCA protein (416 aa).

Residues Gly8 and Arg11 each coordinate ATP. Positions 8 and 11 each coordinate CTP. Mg(2+) is bound by residues Asp21 and Asp23. The ATP site is built by Arg91, Arg137, and Arg140. CTP-binding residues include Arg91, Arg137, and Arg140. The HD domain occupies 226–327 (TGVHIMLVID…VNLLERCDAF (102 aa)).

This sequence belongs to the tRNA nucleotidyltransferase/poly(A) polymerase family. Bacterial CCA-adding enzyme type 1 subfamily. Monomer. Can also form homodimers and oligomers. Mg(2+) is required as a cofactor. It depends on Ni(2+) as a cofactor.

It catalyses the reaction a tRNA precursor + 2 CTP + ATP = a tRNA with a 3' CCA end + 3 diphosphate. The catalysed reaction is a tRNA with a 3' CCA end + 2 CTP + ATP = a tRNA with a 3' CCACCA end + 3 diphosphate. In terms of biological role, catalyzes the addition and repair of the essential 3'-terminal CCA sequence in tRNAs without using a nucleic acid template. Adds these three nucleotides in the order of C, C, and A to the tRNA nucleotide-73, using CTP and ATP as substrates and producing inorganic pyrophosphate. tRNA 3'-terminal CCA addition is required both for tRNA processing and repair. Also involved in tRNA surveillance by mediating tandem CCA addition to generate a CCACCA at the 3' terminus of unstable tRNAs. While stable tRNAs receive only 3'-terminal CCA, unstable tRNAs are marked with CCACCA and rapidly degraded. The sequence is that of Multifunctional CCA protein from Janthinobacterium sp. (strain Marseille) (Minibacterium massiliensis).